We begin with the raw amino-acid sequence, 695 residues long: Elongation factor G 2 (695 aa).

The tr-type G domain occupies 5–280; sequence SKYRNIGIFA…AVVDYLPSPT (276 aa). GTP is bound by residues 14–21, 78–82, and 132–135; these read AHVDAGKT, DTPGH, and NKLD.

It belongs to the TRAFAC class translation factor GTPase superfamily. Classic translation factor GTPase family. EF-G/EF-2 subfamily.

It localises to the cytoplasm. Functionally, catalyzes the GTP-dependent ribosomal translocation step during translation elongation. During this step, the ribosome changes from the pre-translocational (PRE) to the post-translocational (POST) state as the newly formed A-site-bound peptidyl-tRNA and P-site-bound deacylated tRNA move to the P and E sites, respectively. Catalyzes the coordinated movement of the two tRNA molecules, the mRNA and conformational changes in the ribosome. This Photobacterium profundum (strain SS9) protein is Elongation factor G 2.